A 509-amino-acid polypeptide reads, in one-letter code: Scavenger receptor class B member 1 (509 aa).

Residues 1-11 (MGGSSRARWVA) are Cytoplasmic-facing. The helical transmembrane segment at 12–32 (LGLGALGLLFAALGVVMILMV) threads the bilayer. Over 33 to 440 (PSLIKQQVLK…YTQLVLMPQV (408 aa)) the chain is Extracellular. Residues asparagine 102, asparagine 108, asparagine 116, asparagine 173, asparagine 212, asparagine 227, asparagine 255, asparagine 288, asparagine 310, asparagine 330, and asparagine 383 are each glycosylated (N-linked (GlcNAc...) asparagine). An intrachain disulfide couples cysteine 251 to cysteine 384. Residues 441 to 461 (LHYAQYVLLGLGGLLLLVPII) form a helical membrane-spanning segment. Cysteine 462 carries S-palmitoyl cysteine lipidation. Residues 462–509 (CQLRSQEKCFLFWSGSKKGSQDKEAIQAYSESLMSPAAKGTVLQEAKL) lie on the Cytoplasmic side of the membrane.

The protein belongs to the CD36 family. In terms of assembly, the C-terminal region binds to PDZK1. N-glycosylated. Post-translationally, the six cysteines of the extracellular domain are all involved in intramolecular disulfide bonds. Expressed primarily in liver, ovary and adrenal gland, and, at lower levels in other non-placental steroidogenic tissues, including adipose tissue, mammary gland and testis (at protein level). Isoform 2 is expressed at lower levels than isoform 1 in liver, testis and adrenal gland. At the mRNA, but not at the protein level, isoform 2 is the predominant isoform in testis (80%).

The protein resides in the cell membrane. Its subcellular location is the membrane. The protein localises to the caveola. In terms of biological role, receptor for different ligands such as phospholipids, cholesterol ester, lipoproteins, phosphatidylserine and apoptotic cells. Both isoform 1 and isoform 2 act as receptors for HDL, mediating selective uptake of cholesteryl ether and HDL-dependent cholesterol efflux. Also facilitates the flux of free and esterified cholesterol between the cell surface and apoB-containing lipoproteins and modified lipoproteins, although less efficiently than HDL. May be involved in the phagocytosis of apoptotic cells, via its phosphatidylserine binding activity. This is Scavenger receptor class B member 1 (Scarb1) from Mus musculus (Mouse).